Reading from the N-terminus, the 170-residue chain is Lipoprotein signal peptidase (170 aa).

A run of 3 helical transmembrane segments spans residues 12 to 32 (WYWV…WVLA), 67 to 87 (WQRW…TVWL), and 93 to 113 (GLWR…GNLI). Catalysis depends on residues Asp-123 and Asp-141. A helical membrane pass occupies residues 133-153 (HFPAFNIADSAICVGAGLIIL).

The protein belongs to the peptidase A8 family.

Its subcellular location is the cell inner membrane. It catalyses the reaction Release of signal peptides from bacterial membrane prolipoproteins. Hydrolyzes -Xaa-Yaa-Zaa-|-(S,diacylglyceryl)Cys-, in which Xaa is hydrophobic (preferably Leu), and Yaa (Ala or Ser) and Zaa (Gly or Ala) have small, neutral side chains.. Its pathway is protein modification; lipoprotein biosynthesis (signal peptide cleavage). Its function is as follows. This protein specifically catalyzes the removal of signal peptides from prolipoproteins. The polypeptide is Lipoprotein signal peptidase (Shewanella loihica (strain ATCC BAA-1088 / PV-4)).